A 98-amino-acid chain; its full sequence is Large ribosomal subunit protein uL23 (98 aa).

This sequence belongs to the universal ribosomal protein uL23 family. In terms of assembly, part of the 50S ribosomal subunit. Contacts protein L29, and trigger factor when it is bound to the ribosome.

One of the early assembly proteins it binds 23S rRNA. One of the proteins that surrounds the polypeptide exit tunnel on the outside of the ribosome. Forms the main docking site for trigger factor binding to the ribosome. The polypeptide is Large ribosomal subunit protein uL23 (Rickettsia felis (strain ATCC VR-1525 / URRWXCal2) (Rickettsia azadi)).